A 486-amino-acid polypeptide reads, in one-letter code: Ribulose bisphosphate carboxylase large chain (486 aa).

The substrate site is built by Asn-126 and Thr-176. Residue Lys-178 is the Proton acceptor of the active site. Substrate is bound at residue Lys-180. 3 residues coordinate Mg(2+): Lys-204, Asp-206, and Glu-207. Lys-204 carries the post-translational modification N6-carboxylysine. The active-site Proton acceptor is the His-296. Substrate contacts are provided by Arg-297, His-329, and Ser-381.

It belongs to the RuBisCO large chain family. Type I subfamily. Heterohexadecamer of 8 large chains and 8 small chains. Requires Mg(2+) as cofactor.

It carries out the reaction 2 (2R)-3-phosphoglycerate + 2 H(+) = D-ribulose 1,5-bisphosphate + CO2 + H2O. The enzyme catalyses D-ribulose 1,5-bisphosphate + O2 = 2-phosphoglycolate + (2R)-3-phosphoglycerate + 2 H(+). In terms of biological role, ruBisCO catalyzes two reactions: the carboxylation of D-ribulose 1,5-bisphosphate, the primary event in carbon dioxide fixation, as well as the oxidative fragmentation of the pentose substrate. Both reactions occur simultaneously and in competition at the same active site. The polypeptide is Ribulose bisphosphate carboxylase large chain (Rhizobium meliloti (strain 1021) (Ensifer meliloti)).